The sequence spans 180 residues: uncharacterized protein (180 aa).

This sequence to H.influenzae HI_0656.1.

This is an uncharacterized protein from Escherichia coli (strain K12).